Reading from the N-terminus, the 319-residue chain is Mitochondrial thiamine pyrophosphate carrier 1 (319 aa).

Solcar repeat units follow at residues 12–110 (GQRY…VTQS), 121–207 (PQPA…VRVP), and 214–309 (PFGS…VLKI). 6 helical membrane-spanning segments follow: residues 17–35 (VVAAGAIAGMVSRFCVAPL), 91–107 (LLYIFYGAIQFTTYRTV), 127–147 (FVSGATAGGIGTFTTYPFDLL), 182–201 (GVSAAVAQIVPYMGLFFATY), 221–237 (TAGVIASVIAKTGVFPL), and 284–301 (GLTVSLIKAAPASAVTMW).

It belongs to the mitochondrial carrier (TC 2.A.29) family.

It is found in the mitochondrion inner membrane. Its function is as follows. Mitochondrial transporter that mediates uptake of thiamine pyrophosphate (ThPP) into mitochondria. The sequence is that of Mitochondrial thiamine pyrophosphate carrier 1 (TPC1) from Coccidioides immitis (strain RS) (Valley fever fungus).